Here is a 260-residue protein sequence, read N- to C-terminus: MLPYIGHNSYQQHQFPLPEMEIPEKWKLSYEQEAITAPACPRCASSNTKFCYYNNYSLSQPRYFCKGCRRYWTKGGSLRNIPVGGGCRKRSRSRQNSHKRFGRNENRPDGLINQDDGFQSSPPGSDIDLAAVFAQYVTDRSPSSTDNTTGSDQDSPITTTTHALESLSWDICQETDVDLGFYGEFNNLTQKTKEDQEVFGQFLQEDREEIFEFQGLLDDKEIQEILECSFSEEPDQLVSQGSFMINGDNWSSTDLTRFGI.

A Dof-type zinc finger spans residues 38–92; that stretch reads PACPRCASSNTKFCYYNNYSLSQPRYFCKGCRRYWTKGGSLRNIPVGGGCRKRSR. Residues cysteine 40, cysteine 43, cysteine 65, and cysteine 68 each contribute to the Zn(2+) site. The interval 83-124 is disordered; that stretch reads VGGGCRKRSRSRQNSHKRFGRNENRPDGLINQDDGFQSSPPG. Positions 87 to 101 are enriched in basic residues; the sequence is CRKRSRSRQNSHKRF.

The protein localises to the nucleus. Transcription factor that binds specifically to a 5'-AA[AG]G-3' consensus core sequence. In Arabidopsis thaliana (Mouse-ear cress), this protein is Dof zinc finger protein DOF1.2 (DOF1.2).